Reading from the N-terminus, the 423-residue chain is Glutaminase (423 aa).

The segment at 27-312 (GEVAQYIPQL…LSEDMGLHLM (286 aa)) is glutaminase. Substrate is bound by residues Ser69, Asn119, Glu165, Asn172, Tyr196, Tyr248, and Val266. The STAS domain occupies 321 to 423 (AVRAIEERGD…SPQVDDPEEL (103 aa)).

Belongs to the glutaminase family. Homotetramer.

It catalyses the reaction L-glutamine + H2O = L-glutamate + NH4(+). This chain is Glutaminase (glsA), found in Corynebacterium efficiens (strain DSM 44549 / YS-314 / AJ 12310 / JCM 11189 / NBRC 100395).